Reading from the N-terminus, the 446-residue chain is MKHPFQIITTDKSGKHLFATVKNNLQVFDLESGSLLGVWIDEVNSNTSLKKQQEEKIKVLQAQQEELTQTSEDTEQENTAPYKKQKSSVSKPIKVPKIPVPGPGAPPIYNYIRALTLSKDEKFLIGITDSDKSVIIFSIDFENTENCLTLIKRQVFPKRPCAVSTSIDDRTVVVADKFGDVYTIEIDSEAAIDEKELSPLLGHVSMLSDVKIAEHNGKQFILTGDRDEHIKVSNYPKSYIVKHWLFGHREFVSSLHIPDFNTDLLISGGGDEFVCLWNWYKNELLSKVPLRDLIQPFLTDSHLPPERFLTEDSKREISISKILTYVNPKSSEKLLIVLCENTNCVLLFELKDDFSIIHKCTLKVNYSLVDICLDQSSGTFIASKDIESGDDLLEFYQINNDSNNLEIVDRSNLSKAISTANNCEVESRDQFYPLYYINSLRKRSEH.

The tract at residues 67-97 (LTQTSEDTEQENTAPYKKQKSSVSKPIKVPK) is disordered. Low complexity predominate over residues 87–97 (SSVSKPIKVPK). 3 WD repeats span residues 107–147 (PIYN…TENC), 202–243 (GHVS…IVKH), and 247–287 (GHRE…LLSK).

Belongs to the WD repeat TRM82 family. Forms a heterodimer with the catalytic subunit TRM8.

It localises to the nucleus. It functions in the pathway tRNA modification; N(7)-methylguanine-tRNA biosynthesis. Required for the formation of N(7)-methylguanine at position 46 (m7G46) in tRNA. In the complex, it is required to stabilize and induce conformational changes of the catalytic subunit. In Debaryomyces hansenii (strain ATCC 36239 / CBS 767 / BCRC 21394 / JCM 1990 / NBRC 0083 / IGC 2968) (Yeast), this protein is tRNA (guanine-N(7)-)-methyltransferase non-catalytic subunit TRM82.